A 120-amino-acid polypeptide reads, in one-letter code: UPF0344 protein lmo2265 (120 aa).

4 helical membrane passes run 3–23 (GYIHLISWVAIVVLTITALLI), 33–53 (MLQMINRVFYILVILSGIMMV), 62–82 (ILAIFKILMGIIVIGVVEMLL), and 92–112 (GMFLMIFVIVVVITISLGFYL).

It belongs to the UPF0344 family.

The protein localises to the cell membrane. This chain is UPF0344 protein lmo2265, found in Listeria monocytogenes serovar 1/2a (strain ATCC BAA-679 / EGD-e).